The primary structure comprises 166 residues: Putative tRNA (cytidine(34)-2'-O)-methyltransferase (166 aa).

S-adenosyl-L-methionine-binding residues include Leu-83, Gly-109, Ile-130, and Ser-138.

This sequence belongs to the class IV-like SAM-binding methyltransferase superfamily. RNA methyltransferase TrmH family. TrmL subfamily.

It is found in the cytoplasm. The enzyme catalyses cytidine(34) in tRNA + S-adenosyl-L-methionine = 2'-O-methylcytidine(34) in tRNA + S-adenosyl-L-homocysteine + H(+). It catalyses the reaction 5-carboxymethylaminomethyluridine(34) in tRNA(Leu) + S-adenosyl-L-methionine = 5-carboxymethylaminomethyl-2'-O-methyluridine(34) in tRNA(Leu) + S-adenosyl-L-homocysteine + H(+). Could methylate the ribose at the nucleotide 34 wobble position in tRNA. The polypeptide is Putative tRNA (cytidine(34)-2'-O)-methyltransferase (Mycoplasma genitalium (strain ATCC 33530 / DSM 19775 / NCTC 10195 / G37) (Mycoplasmoides genitalium)).